Consider the following 281-residue polypeptide: MNIADGRQAFPAPAKLNLDLRITGRREDGYHNIESIFCLIDLQDTVYLKPRDDGKIILHNPVGGIPQEADLSYRAASLLQKYARNLAGVEIWLDKKIPTGAGLGGGSSDAATVLLVLNRWWQCGLTQWQLIDLGAALGADVPFFIFGKNAFASGIGEKLIGMDIPKQWYVIVKPPVHVSTAKIFTYEGLTRDSASSIMPTFQNLQPFRNDMQAVVFKEYPEVWKAYSELSKYGSAMMTGSGACIFAAFQARNSAYNIYRQVSGLYEAYLAEGLSKHPLLSV.

K15 is a catalytic residue. Position 98–108 (98–108) interacts with ATP; sequence PTGAGLGGGSS. Residue D140 is part of the active site.

This sequence belongs to the GHMP kinase family. IspE subfamily.

It catalyses the reaction 4-CDP-2-C-methyl-D-erythritol + ATP = 4-CDP-2-C-methyl-D-erythritol 2-phosphate + ADP + H(+). It participates in isoprenoid biosynthesis; isopentenyl diphosphate biosynthesis via DXP pathway; isopentenyl diphosphate from 1-deoxy-D-xylulose 5-phosphate: step 3/6. In terms of biological role, catalyzes the phosphorylation of the position 2 hydroxy group of 4-diphosphocytidyl-2C-methyl-D-erythritol. The polypeptide is 4-diphosphocytidyl-2-C-methyl-D-erythritol kinase (Neisseria gonorrhoeae (strain NCCP11945)).